The following is a 132-amino-acid chain: Small ribosomal subunit protein uS8c (132 aa).

The protein belongs to the universal ribosomal protein uS8 family. As to quaternary structure, part of the 30S ribosomal subunit.

It localises to the plastid. The protein resides in the chloroplast. Its function is as follows. One of the primary rRNA binding proteins, it binds directly to 16S rRNA central domain where it helps coordinate assembly of the platform of the 30S subunit. The polypeptide is Small ribosomal subunit protein uS8c (rps8) (Liriodendron tulipifera (Tuliptree)).